Consider the following 172-residue polypeptide: MIIRLAGMSVRQGCLLGLLMCALMMGVALVLQYVYGLTPCPLCIGQRIAVLLAAFVFAIGALHNPAGNLGRGLYAGLAALASVLGLAVAARHVWLQSLPPENVPSCGPGLDYMMEVLPLWDVLSRVLAGSGECAEIHGSLLGMSIPQWTLLGFAVLLLIPLGMLAGIVIRRR.

The Cytoplasmic segment spans residues 1–13; it reads MIIRLAGMSVRQG. Residues 14–30 form a helical membrane-spanning segment; that stretch reads CLLGLLMCALMMGVALV. Over 31 to 48 the chain is Periplasmic; that stretch reads LQYVYGLTPCPLCIGQRI. Cys-40 and Cys-43 form a disulfide bridge. The chain crosses the membrane as a helical span at residues 49–65; the sequence is AVLLAAFVFAIGALHNP. Topologically, residues 66–72 are cytoplasmic; sequence AGNLGRG. A helical membrane pass occupies residues 73–90; sequence LYAGLAALASVLGLAVAA. The Periplasmic portion of the chain corresponds to 91–147; it reads RHVWLQSLPPENVPSCGPGLDYMMEVLPLWDVLSRVLAGSGECAEIHGSLLGMSIPQ. Cys-106 and Cys-133 form a disulfide bridge. Residues 148-166 form a helical membrane-spanning segment; the sequence is WTLLGFAVLLLIPLGMLAG. Topologically, residues 167-172 are cytoplasmic; that stretch reads IVIRRR.

It belongs to the DsbB family.

The protein localises to the cell inner membrane. Its function is as follows. Required for disulfide bond formation in some periplasmic proteins. Acts by oxidizing the DsbA protein. The chain is Disulfide bond formation protein B from Chromohalobacter salexigens (strain ATCC BAA-138 / DSM 3043 / CIP 106854 / NCIMB 13768 / 1H11).